We begin with the raw amino-acid sequence, 385 residues long: MTELEFVTEHRRYLHKHPELSLHEYETTKYIAHFLDDLGVPYERPLDTGVIAYLSGNSTHTIAYRADIDALPIYEENNVSYRSEVDHVMHACGHDGHTTALMLFVKRCKNLADKGELPQNIVFIFQPAEETGGGANRLIRAGAFEKYPIEAVFGIHVMPFENEGRVVIRDEEITASATEYRFYLHGLSSHVADKEQGHSCGEALQHVLTQVGQIQQYHLNGLKRNIVHMGHFEAGEAINTVPSNGYLEGTIRTYDVKDLEIVKQQMTKISESVKLLFNVECEVKFEEGYPPTFNDPQLRKHVENGLVNAEFEVIDKPTPYLFGEDFSFYSQIAPSYFVFVGVRDEAKGYVTGLHTSHLNFNESILIRIADYYEQILKSYSEVQSQ.

It belongs to the peptidase M20 family.

This is an uncharacterized protein from Staphylococcus saprophyticus subsp. saprophyticus (strain ATCC 15305 / DSM 20229 / NCIMB 8711 / NCTC 7292 / S-41).